The following is a 379-amino-acid chain: Probable protein phosphatase 2C 46 (379 aa).

Residues 1-20 (MLSTLMKLLSACLWPSSSSG) form the signal peptide. In terms of domain architecture, PPM-type phosphatase spans 42–353 (LVGEFSMAVV…DDITVVIIFL (312 aa)). S73 is subject to Phosphoserine. Residues D84, G85, D285, and D344 each coordinate Mn(2+).

It belongs to the PP2C family. In terms of assembly, interacts with SAUR19. Mg(2+) is required as a cofactor. It depends on Mn(2+) as a cofactor.

It catalyses the reaction O-phospho-L-seryl-[protein] + H2O = L-seryl-[protein] + phosphate. It carries out the reaction O-phospho-L-threonyl-[protein] + H2O = L-threonyl-[protein] + phosphate. Its function is as follows. May dephosphorylate and repress plasma membrane H(+)-ATPases (PM H(+)-ATPases, e.g. AHA1 and AHA2), thus influencing negatively plant growth and fitness. The polypeptide is Probable protein phosphatase 2C 46 (Arabidopsis thaliana (Mouse-ear cress)).